The primary structure comprises 126 residues: Large ribosomal subunit protein bL20c (126 aa).

Belongs to the bacterial ribosomal protein bL20 family.

The protein localises to the plastid. Its subcellular location is the chloroplast. Functionally, binds directly to 23S ribosomal RNA and is necessary for the in vitro assembly process of the 50S ribosomal subunit. It is not involved in the protein synthesizing functions of that subunit. This chain is Large ribosomal subunit protein bL20c, found in Guizotia abyssinica (Niger).